The chain runs to 133 residues: UPF0292 protein TON_0187 (133 aa).

Positions 20–100 (EGAIIVEGPR…RVDSETRKEL (81 aa)) constitute a Toprim domain. Mg(2+)-binding residues include E26, D69, and D71.

It belongs to the UPF0292 family. Mg(2+) is required as a cofactor.

The chain is UPF0292 protein TON_0187 from Thermococcus onnurineus (strain NA1).